The chain runs to 69 residues: M-poneratoxin-Dq4e (69 aa).

An N-terminal signal peptide occupies residues 1–25 (MKLSAFTLAFALILMMAIMYNMAEA). Positions 26–39 (AALADADADAEAIA) are excised as a propeptide.

Expressed by the venom gland.

It is found in the secreted. May have antimicrobial properties, like most ant linear peptides. In addition, when tested in vitro on the parasite Trypanosoma cruzi (responsible of the Chagas disease), is able to moderately reduce the number of the three forms (epimastigote, trypomastigote and amastigote) by inducing cell death through necrosis. This is M-poneratoxin-Dq4e from Dinoponera quadriceps (South American ant).